Reading from the N-terminus, the 311-residue chain is UPF0324 membrane protein VV1_3166 (311 aa).

The next 10 membrane-spanning stretches (helical) occupy residues 8 to 28 (FIFALLLCLSPWVSSPTALVL), 51 to 71 (LLSYSIIGLGFGIQFQQAIAV), 74 to 94 (DGIGLIVVTIAGTLLLGFLVA), 106 to 126 (LISAGTAICGGSAIAAVAPAI), 133 to 153 (IALALATVFVLNSLALFIFPV), 165 to 185 (FGTWAAIAIHDTSSVVGAASA), 197 to 217 (LKLARALWIIPVALLSAILFA), 228 to 248 (LVLPYFIFWYCAAIAFSDLFP), 256 to 276 (GIFSVAKQALVVCLFLIGCSI), and 289 to 309 (LIFGLSLWVVISTTSLSWLLL).

This sequence belongs to the UPF0324 family.

The protein resides in the cell membrane. In Vibrio vulnificus (strain CMCP6), this protein is UPF0324 membrane protein VV1_3166.